Here is a 381-residue protein sequence, read N- to C-terminus: Alkanesulfonate monooxygenase (381 aa).

Belongs to the SsuD family. Homotetramer.

The enzyme catalyses an alkanesulfonate + FMNH2 + O2 = an aldehyde + FMN + sulfite + H2O + 2 H(+). Catalyzes the desulfonation of aliphatic sulfonates. This chain is Alkanesulfonate monooxygenase, found in Escherichia coli O17:K52:H18 (strain UMN026 / ExPEC).